The sequence spans 653 residues: Putative clathrin assembly protein At2g25430 (653 aa).

The ENTH domain occupies 23–159 (VASNMAPDLE…ELALFERKSG (137 aa)). Residues 160-171 (VSVNSGGNSSHH) are compositionally biased toward low complexity. The tract at residues 160–240 (VSVNSGGNSS…GGGGGGRDEK (81 aa)) is disordered. Over residues 172–186 (SNNDDRYGRGRDDFR) the composition is skewed to basic and acidic residues. A compositionally biased stretch (gly residues) spans 197–214 (NGGGGGSDFRGDNNGYGG). Serine 221 carries the phosphoserine modification. At threonine 244 the chain carries Phosphothreonine. The span at 376–389 (RAKRGKSPERKEIE) shows a compositional bias: basic and acidic residues. Positions 376–431 (RAKRGKSPERKEIEAPPPVVEEEEPEPDMNEIKALPPPENYTPPPPPEPEPQPEKP) are disordered. Residues 395 to 404 (VEEEEPEPDM) are compositionally biased toward acidic residues. A compositionally biased stretch (pro residues) spans 410-425 (LPPPENYTPPPPPEPE).

The protein localises to the membrane. Its subcellular location is the clathrin-coated pit. It localises to the golgi apparatus. It is found in the cytoplasmic vesicle. The protein resides in the clathrin-coated vesicle. The chain is Putative clathrin assembly protein At2g25430 from Arabidopsis thaliana (Mouse-ear cress).